The chain runs to 286 residues: Ribosomal RNA small subunit methyltransferase I (286 aa).

The protein belongs to the methyltransferase superfamily. RsmI family.

The protein localises to the cytoplasm. The enzyme catalyses cytidine(1402) in 16S rRNA + S-adenosyl-L-methionine = 2'-O-methylcytidine(1402) in 16S rRNA + S-adenosyl-L-homocysteine + H(+). Functionally, catalyzes the 2'-O-methylation of the ribose of cytidine 1402 (C1402) in 16S rRNA. The sequence is that of Ribosomal RNA small subunit methyltransferase I from Escherichia coli O157:H7.